The primary structure comprises 122 residues: Acidic phospholipase A2 CbIalpha (122 aa).

7 cysteine pairs are disulfide-bonded: C26-C115, C28-C44, C43-C95, C49-C122, C50-C88, C57-C81, and C75-C86. Positions 27, 29, and 31 each coordinate Ca(2+). Residue H47 is part of the active site. D48 serves as a coordination point for Ca(2+). D89 is an active-site residue.

Belongs to the phospholipase A2 family. Group II subfamily. D49 sub-subfamily. In terms of assembly, heterodimer of an acidic subunit (CbIalpha or CbIbeta) and a basic subunit (CbII). The acidic subunit is non-toxic, and increases the toxicity of the basic subunit. It depends on Ca(2+) as a cofactor. Expressed by the venom gland.

The protein resides in the secreted. The enzyme catalyses a 1,2-diacyl-sn-glycero-3-phosphocholine + H2O = a 1-acyl-sn-glycero-3-phosphocholine + a fatty acid + H(+). Its function is as follows. Heterodimer: presynaptic neurotoxin. In terms of biological role, monomer: Snake venom phospholipase A2 (PLA2) is inactive towards micellar phosphatidylcholine but is weakly active towards non-micellar dithiolecithin. PLA2 catalyzes the calcium-dependent hydrolysis of the 2-acyl groups in 3-sn-phosphoglycerides. The chain is Acidic phospholipase A2 CbIalpha from Pseudocerastes fieldi (Field's horned viper).